Here is a 545-residue protein sequence, read N- to C-terminus: Baeyer-Villiger monooxygenase (545 aa).

6 residues coordinate FAD: phenylalanine 24, aspartate 45, tryptophan 54, aspartate 65, tyrosine 71, and valine 118.

It belongs to the FAD-binding monooxygenase family. FAD serves as cofactor.

Its function is as follows. Catalyzes a Baeyer-Villiger oxidation reaction, i.e. the insertion of an oxygen atom into a carbon-carbon bond adjacent to a carbonyl, which converts ketones to esters or lactones using NADPH as an electron donor. Besides cycloalkanones, can use cyclic alpha,beta-unsaturated ketones as substrates, leading to conjugated ene-lactones. Can also act on methylated cycloalkanones and methylated cycloalkenones with high enantioselectivity in some cases. This chain is Baeyer-Villiger monooxygenase, found in Pseudooceanicola batsensis (strain ATCC BAA-863 / DSM 15984 / KCTC 12145 / HTCC2597) (Oceanicola batsensis).